Reading from the N-terminus, the 104-residue chain is Type VII secretion system extracellular protein B (104 aa).

The protein belongs to the WXG100 family. As to quaternary structure, homodimer. When mixed with EsxA does not form heterodimers.

It is found in the secreted. Its function is as follows. Virulence factor that is important for the establishment of infection in the host. EsxB is required for EsxA synthesis as well as secretion. Mediates together with EsxA the release of S.aureus from the host cell. Also inhibits host cytokine production and thus modulates dendritic cell-mediated immunity. The chain is Type VII secretion system extracellular protein B from Staphylococcus aureus (strain MSSA476).